A 177-amino-acid chain; its full sequence is MSTSVSPVVRLVRGDITDQSVDVIVNAANSSLLGGGGVDGAIHRRGGPDILAACRELRASRYGKGLPTGQAVATTAGRLDARWIVHTVGPVFSGAQDRSALLASCYRESLRLAAELGARSIAFPAISTGIYGWPMDDGARIAVRTVLAETVEPVEEVRFVLFDAHAYVEFEEVLAMR.

The Macro domain maps to 1-177 (MSTSVSPVVR…VEFEEVLAMR (177 aa)).

It belongs to the MacroD-type family.

This chain is Macro domain-containing protein in non 5'region, found in Streptomyces griseus.